We begin with the raw amino-acid sequence, 630 residues long: tRNA uridine 5-carboxymethylaminomethyl modification enzyme MnmG (630 aa).

FAD-binding positions include 13–18 (GGGHAG), V125, and S180. 273–287 (GPRYCPSIEDKIHRF) serves as a coordination point for NAD(+). Q370 contributes to the FAD binding site.

This sequence belongs to the MnmG family. As to quaternary structure, homodimer. Heterotetramer of two MnmE and two MnmG subunits. FAD is required as a cofactor.

The protein localises to the cytoplasm. Functionally, NAD-binding protein involved in the addition of a carboxymethylaminomethyl (cmnm) group at the wobble position (U34) of certain tRNAs, forming tRNA-cmnm(5)s(2)U34. In Shewanella woodyi (strain ATCC 51908 / MS32), this protein is tRNA uridine 5-carboxymethylaminomethyl modification enzyme MnmG.